Consider the following 415-residue polypeptide: Fructose-like permease IIC component (415 aa).

Residues 1–46 are Cytoplasmic-facing; sequence MAIKKRSATVVPGASGAAAAVKNLQASKSSFWGELPQHVMSGISRM. Positions 35–415 constitute a PTS EIIC type-2 domain; that stretch reads LPQHVMSGIS…RKGKLLIDSL (381 aa). A helical membrane pass occupies residues 47–67; that stretch reads VPTLIMGGVILAFSQLIAYSW. The Periplasmic segment spans residues 68 to 101; it reads LKIPAEIGIMDALNSGKFSGFDLSLLKFAWLSQS. A helical transmembrane segment spans residues 102-122; sequence FGGVLFGFAIPMFAAFVANSI. Topologically, residues 123–126 are cytoplasmic; the sequence is GGKL. A helical membrane pass occupies residues 127-147; it reads AFPAGFIGGLMSTQPTQLLNF. The Periplasmic portion of the chain corresponds to 148 to 157; sequence DPSTMQWATS. The chain crosses the membrane as a helical span at residues 158–178; that stretch reads SPVPSTFIGALIISIVAGYLV. Topologically, residues 179–197 are cytoplasmic; sequence KWMNQKIQLPDFLLAFKTT. Residues 198 to 218 form a helical membrane-spanning segment; the sequence is FLLPILSAIFVMLAMYYVITP. At 219–237 the chain is on the periplasmic side; it reads FGGWINGGIRTVLTAAGEK. A helical membrane pass occupies residues 238 to 258; sequence GALMYAMGIAAATAIDLGGPI. Topologically, residues 259 to 276 are cytoplasmic; the sequence is NKAAGFVAFSFTTDHVLP. A helical membrane pass occupies residues 277–297; it reads VTARSIAIVIPPIGLGLATII. Over 298–318 the chain is Periplasmic; the sequence is DRRLTGKRLFNAQLYPQGKTA. Residues 319-339 traverse the membrane as a helical segment; the sequence is MFLAFMGISEGAIPFALESPI. Residues 340 to 341 lie on the Cytoplasmic side of the membrane; that stretch reads TA. A helical transmembrane segment spans residues 342-362; sequence IPSYMVGAIVGSTAAVWLGAV. At 363–378 the chain is on the periplasmic side; that stretch reads QWFPESAIWAWPLVTN. Residues 379-399 form a helical membrane-spanning segment; that stretch reads LGVYMAGIALGAIITALMVVF. Residues 400–415 lie on the Cytoplasmic side of the membrane; that stretch reads LRLMMFRKGKLLIDSL.

The protein localises to the cell inner membrane. The phosphoenolpyruvate-dependent sugar phosphotransferase system (PTS), a major carbohydrate active -transport system, catalyzes the phosphorylation of incoming sugar substrates concomitant with their translocation across the cell membrane. The polypeptide is Fructose-like permease IIC component (fryC) (Shigella flexneri).